Consider the following 1788-residue polypeptide: Laminin subunit beta-1 (1788 aa).

Residues 1–24 form the signal peptide; the sequence is MLELRLIVVIVLALLSWQWDPVDS. The segment at 23-43 is disordered; sequence DSQRPPQHGRRDRPKYPPNKF. The 238-residue stretch at 50–287 folds into the Laminin N-terminal domain; that stretch reads ERSSCYPATG…GISNMVVRGS (238 aa). N-linked (GlcNAc...) asparagine glycans are attached at residues Asn-138, Asn-201, and Asn-232. Cystine bridges form between Cys-288–Cys-297, Cys-290–Cys-318, Cys-320–Cys-329, Cys-332–Cys-352, Cys-355–Cys-364, Cys-357–Cys-382, Cys-385–Cys-394, Cys-397–Cys-415, Cys-418–Cys-431, Cys-420–Cys-446, Cys-448–Cys-457, Cys-460–Cys-475, Cys-478–Cys-491, Cys-480–Cys-498, Cys-500–Cys-509, Cys-512–Cys-526, Cys-529–Cys-541, Cys-531–Cys-548, and Cys-550–Cys-559. 4 consecutive Laminin EGF-like domains span residues 288 to 354, 355 to 417, 418 to 477, and 478 to 528; these read CSCY…ACKK, CECN…VCQP, CDCD…GCEP, and CTCN…GCSL. Residue Asn-487 is glycosylated (N-linked (GlcNAc...) asparagine). Residues 529–559 enclose the Laminin EGF-like 5; truncated domain; that stretch reads CNCDAGGSYDNYCDVISGQCRCRPHMTGRSC. In terms of domain architecture, Laminin IV type B spans 567-783; that stretch reads FIPLLPEVHE…LDNILSVFVH (217 aa). Asn-591 carries an N-linked (GlcNAc...) asparagine glycan. The short motif at 641–643 is the Cell attachment site element; that stretch reads RGD. 32 cysteine pairs are disulfide-bonded: Cys-789-Cys-801, Cys-791-Cys-808, Cys-810-Cys-819, Cys-822-Cys-834, Cys-837-Cys-849, Cys-839-Cys-856, Cys-858-Cys-867, Cys-870-Cys-880, Cys-883-Cys-892, Cys-885-Cys-899, Cys-902-Cys-911, Cys-914-Cys-930, Cys-933-Cys-949, Cys-935-Cys-960, Cys-962-Cys-971, Cys-974-Cys-988, Cys-991-Cys-1005, Cys-993-Cys-1012, Cys-1015-Cys-1024, Cys-1027-Cys-1040, Cys-1043-Cys-1057, Cys-1045-Cys-1064, Cys-1066-Cys-1075, Cys-1078-Cys-1091, Cys-1094-Cys-1106, Cys-1096-Cys-1113, Cys-1115-Cys-1124, Cys-1127-Cys-1139, Cys-1142-Cys-1154, Cys-1144-Cys-1161, Cys-1163-Cys-1172, and Cys-1175-Cys-1186. Laminin EGF-like domains are found at residues 789-836, 837-882, 883-932, 933-990, 991-1042, 1043-1093, 1094-1141, and 1142-1188; these read CNCN…GCKA, CDCN…ECRV, CQCN…GCRP, CRCP…TCSK, CECS…NCQQ, CECD…GCES, CNCD…KCQP, and CECD…HCSP. N-linked (GlcNAc...) asparagine glycosylation occurs at Asn-1051. The interval 1189–1405 is domain II; it reads CGECFNNWDL…SQIPELNNQV (217 aa). Residues Asn-1246, Asn-1301, Asn-1330, and Asn-1341 are each glycosylated (N-linked (GlcNAc...) asparagine). The stretch at 1255–1405 forms a coiled coil; the sequence is EKLDYETQSL…SQIPELNNQV (151 aa). Residues 1406–1432 are domain alpha; the sequence is CGKPGDPCDSLCGGAGCGHCGGFLSCE. A domain I region spans residues 1433–1788; sequence HGAKTHSEEA…RGSHYRQCYT (356 aa). A coiled-coil region spans residues 1453-1505; sequence ITSKKDQADQTIRALTQAKLNASEAYEKAKRGFEQSERYLNQTNANIKLAENL. N-linked (GlcNAc...) asparagine glycans are attached at residues Asn-1473, Asn-1493, and Asn-1515. Residues 1540-1561 adopt a coiled-coil conformation; it reads EEIETLGDQINRAVSSLKNVEA. Residues Asn-1581, Asn-1644, and Asn-1703 are each glycosylated (N-linked (GlcNAc...) asparagine). Positions 1608–1762 form a coiled coil; sequence QGKAKDAIQQ…QQLLRLQAEI (155 aa). Positions 1690–1719 are disordered; that stretch reads GEANNLQSATSATNQTLTDRASRSENARER. Residues 1693–1708 show a composition bias toward polar residues; the sequence is NNLQSATSATNQTLTD. Residues 1709 to 1719 are compositionally biased toward basic and acidic residues; sequence RASRSENARER.

In terms of assembly, laminin is a complex glycoprotein, consisting of three different polypeptide chains (alpha, beta, gamma), which are bound to each other by disulfide bonds into a cross-shaped molecule comprising one long and three short arms with globules at each end. Found in the basement membranes (major component).

The protein resides in the secreted. It is found in the extracellular space. It localises to the extracellular matrix. The protein localises to the basement membrane. In terms of biological role, binding to cells via a high affinity receptor, laminin is thought to mediate the attachment, migration and organization of cells into tissues during embryonic development by interacting with other extracellular matrix components. Required for Ndg localization to the basement membrane. This is Laminin subunit beta-1 (LanB1) from Drosophila melanogaster (Fruit fly).